The following is a 226-amino-acid chain: 7-cyano-7-deazaguanine synthase (226 aa).

10-20 (LSGGLDSATAA) is an ATP binding site. Cys191, Cys199, Cys202, and Cys205 together coordinate Zn(2+).

The protein belongs to the QueC family. Zn(2+) serves as cofactor.

The catalysed reaction is 7-carboxy-7-deazaguanine + NH4(+) + ATP = 7-cyano-7-deazaguanine + ADP + phosphate + H2O + H(+). It functions in the pathway purine metabolism; 7-cyano-7-deazaguanine biosynthesis. Functionally, catalyzes the ATP-dependent conversion of 7-carboxy-7-deazaguanine (CDG) to 7-cyano-7-deazaguanine (preQ(0)). The chain is 7-cyano-7-deazaguanine synthase from Prochlorococcus marinus (strain MIT 9303).